The chain runs to 568 residues: Pentatricopeptide repeat-containing protein At1g73400, mitochondrial (568 aa).

The N-terminal 55 residues, 1–55 (MMRRLVSYFVRSRFSLHLSTTPPQRSALFSHILSSHLDSIQINKKISSFSVHRFC), are a transit peptide targeting the mitochondrion. PPR repeat units lie at residues 233 to 263 (EINA…MRHR), 267 to 301 (DANT…GHKP), 302 to 336 (ENFT…GSAV), 340 to 374 (TAKT…GCLP), 375 to 409 (DVST…GYPP), 410 to 444 (DIVT…RCAP), 445 to 479 (SVQT…DCVQ), and 480 to 514 (DVET…GLKL).

This sequence belongs to the PPR family. P subfamily.

The protein resides in the mitochondrion. The chain is Pentatricopeptide repeat-containing protein At1g73400, mitochondrial from Arabidopsis thaliana (Mouse-ear cress).